A 261-amino-acid chain; its full sequence is tRNA pseudouridine synthase A (261 aa).

Asp-51 acts as the Nucleophile in catalysis. Residue Tyr-109 participates in substrate binding.

Belongs to the tRNA pseudouridine synthase TruA family. In terms of assembly, homodimer.

The catalysed reaction is uridine(38/39/40) in tRNA = pseudouridine(38/39/40) in tRNA. In terms of biological role, formation of pseudouridine at positions 38, 39 and 40 in the anticodon stem and loop of transfer RNAs. The protein is tRNA pseudouridine synthase A of Idiomarina loihiensis (strain ATCC BAA-735 / DSM 15497 / L2-TR).